Here is a 565-residue protein sequence, read N- to C-terminus: Heme/hemopexin transporter protein HuxB (565 aa).

A signal peptide spans 1–26 (MKMRPRYSVIASAVSLGFVLSKSVMA). One can recognise a POTRA domain in the interval 73 to 150 (FPLKQVQILD…GTVKILLLKG (78 aa)).

It belongs to the TPS (TC 1.B.20) family.

It localises to the cell outer membrane. Likely functions in the release of soluble HxuA from the cell. In terms of biological role, probable member of a two partner secretion pathway (TPS) in which it mediates the secretion of HuxA. The polypeptide is Heme/hemopexin transporter protein HuxB (hxuB) (Haemophilus influenzae (strain ATCC 51907 / DSM 11121 / KW20 / Rd)).